The sequence spans 402 residues: N-acetyllactosaminide beta-1,6-N-acetylglucosaminyl-transferase (402 aa).

The Cytoplasmic segment spans residues 1-7; it reads MMGSWKH. The helical; Signal-anchor for type II membrane protein transmembrane segment at 8–23 threads the bilayer; it reads CLFSASLISALIFVFV. Residues 24–400 lie on the Lumenal side of the membrane; sequence YNTELWENKR…QSETAIQPSW (377 aa). Residue asparagine 41 is glycosylated (N-linked (GlcNAc...) asparagine).

It belongs to the glycosyltransferase 14 family. Expressed in lens epithelium cells. In terms of tissue distribution, expressed in reticulocytes.

It localises to the golgi apparatus membrane. The enzyme catalyses a beta-D-Gal-(1-&gt;4)-beta-D-GlcNAc-(1-&gt;3)-beta-D-Gal-(1-&gt;4)-beta-D-GlcNAc derivative + UDP-N-acetyl-alpha-D-glucosamine = a beta-D-Gal-(1-&gt;4)-beta-D-GlcNAc-(1-&gt;3)-[beta-D-GlcNAc-(1-&gt;6)]-beta-D-Gal-(1-&gt;4)-N-acetyl-beta-D-glucosaminyl derivative + UDP + H(+). It participates in protein modification; protein glycosylation. Functionally, branching enzyme that converts linear into branched poly-N-acetyllactosaminoglycans. Introduces the blood group I antigen during embryonic development. It is closely associated with the development and maturation of erythroid cells. In terms of biological role, determines the expression of the blood group I antigen in erythrocytes. The protein is N-acetyllactosaminide beta-1,6-N-acetylglucosaminyl-transferase (GCNT2) of Homo sapiens (Human).